Here is a 359-residue protein sequence, read N- to C-terminus: Molybdenum import ATP-binding protein ModC (359 aa).

The ABC transporter domain occupies Met1–Asp236. Residue Gly34–Thr41 participates in ATP binding. The Mop domain maps to Gln294–Ala359.

It belongs to the ABC transporter superfamily. Molybdate importer (TC 3.A.1.8) family. As to quaternary structure, the complex is composed of two ATP-binding proteins (ModC), two transmembrane proteins (ModB) and a solute-binding protein (ModA).

It localises to the cell inner membrane. The enzyme catalyses molybdate(out) + ATP + H2O = molybdate(in) + ADP + phosphate + H(+). Functionally, part of the ABC transporter complex ModABC involved in molybdenum import. Responsible for energy coupling to the transport system. The chain is Molybdenum import ATP-binding protein ModC from Dechloromonas aromatica (strain RCB).